The sequence spans 564 residues: NADPH oxidase 1 (564 aa).

The Cytoplasmic segment spans residues Met1 to Trp9. A helical membrane pass occupies residues Phe10–Phe30. Topologically, residues Leu31–Lys44 are extracellular. Residues Ile45–Cys72 traverse the membrane as a helical segment. The Ferric oxidoreductase domain maps to Arg54–Glu283. Topologically, residues Arg73–Lys102 are cytoplasmic. Heme contacts are provided by His101 and His115. A helical transmembrane segment spans residues Leu103–Phe123. Topologically, residues Asp124–Val168 are extracellular. An N-linked (GlcNAc...) asparagine glycan is attached at Asn162. The helical transmembrane segment at Thr169 to Val189 threads the bilayer. At Thr190–Tyr206 the chain is on the cytoplasmic side. Residues Thr207–Val227 form a helical membrane-spanning segment. Heme contacts are provided by His209 and His221. The Extracellular segment spans residues Arg228–Glu396. Asn236 carries N-linked (GlcNAc...) asparagine glycosylation. Positions Arg284 to Asp391 constitute an FAD-binding FR-type domain. FAD is bound at residue His338–Ser344. A helical membrane pass occupies residues Val397–Ile417. The tract at residues Val397–Leu536 is interaction with NOXO1. The Cytoplasmic segment spans residues Trp418 to Phe564. Phosphothreonine is present on Thr430.

In terms of assembly, NOX1, NOXA1, NOXO1, RAC1 and CYBA forms a functional multimeric complex supporting reactive oxygen species (ROS) production. Interacts with NOXO1. Interacts (via FAD-binding FR-type domain) with ARHGEF7 (via PH domain). The phosphorylated form at Thr-430 interacts with NOXA1 with greater affinity. It depends on FAD as a cofactor. In terms of processing, phosphorylation at Thr-430 mediated by PKC/PRKBC positively regulates its interaction with NOXA1 and enzyme activity. Detected in colon, uterus, prostate, and colon carcinoma, but not in peripheral blood leukocytes.

The protein resides in the cell projection. It is found in the invadopodium membrane. It localises to the cell membrane. It carries out the reaction NADPH + 2 O2 = 2 superoxide + NADP(+) + H(+). With respect to regulation, the oxidase activity is potentiated by NOXA1, NOXO1 and RAC1. Its function is as follows. NADPH oxidase that catalyzes the generation of superoxide from molecular oxygen utilizing NADPH as an electron donor. This chain is NADPH oxidase 1, found in Homo sapiens (Human).